The following is a 220-amino-acid chain: ATP-dependent Clp protease proteolytic subunit 1 (220 aa).

The active-site Nucleophile is the serine 118. The active site involves histidine 143.

Belongs to the peptidase S14 family. As to quaternary structure, fourteen ClpP subunits assemble into 2 heptameric rings which stack back to back to give a disk-like structure with a central cavity, resembling the structure of eukaryotic proteasomes.

The protein localises to the cytoplasm. The catalysed reaction is Hydrolysis of proteins to small peptides in the presence of ATP and magnesium. alpha-casein is the usual test substrate. In the absence of ATP, only oligopeptides shorter than five residues are hydrolyzed (such as succinyl-Leu-Tyr-|-NHMec, and Leu-Tyr-Leu-|-Tyr-Trp, in which cleavage of the -Tyr-|-Leu- and -Tyr-|-Trp bonds also occurs).. In terms of biological role, cleaves peptides in various proteins in a process that requires ATP hydrolysis. Has a chymotrypsin-like activity. Plays a major role in the degradation of misfolded proteins. This Rhodococcus jostii (strain RHA1) protein is ATP-dependent Clp protease proteolytic subunit 1.